Consider the following 339-residue polypeptide: Deoxyhypusine hydroxylase (339 aa).

2 HEAT-like PBS-type repeats span residues 71–97 (LKHELAYCLGQTRNPDAVSYLLEVVKN) and 104–130 (CRHEAAEGLGALGFDTSLDVLKALRDD). Fe cation is bound by residues H73, E74, H106, and E107. The disordered stretch occupies residues 159–183 (EKLKPSDFTSIDPAPPLPMASSQPS). HEAT-like PBS-type repeat units lie at residues 200–233 (QRYRAMFALRDLASPPDLPTAVEAVEALAKGLKD), 238–264 (FRHEVAFVFGQLCHPASVPSLTETLSD), and 271–298 (VRHEAAEALGSLGDVEGVEDTLKKFLND). Residues H240, E241, H273, and E274 each contribute to the Fe cation site.

This sequence belongs to the deoxyhypusine hydroxylase family. Fe(2+) is required as a cofactor.

The protein localises to the cytoplasm. It localises to the nucleus. The catalysed reaction is [eIF5A protein]-deoxyhypusine + AH2 + O2 = [eIF5A protein]-hypusine + A + H2O. Its pathway is protein modification; eIF5A hypusination. Its function is as follows. Catalyzes the hydroxylation of the N(6)-(4-aminobutyl)-L-lysine intermediate to form hypusine, an essential post-translational modification only found in mature eIF-5A factor. This Aspergillus oryzae (strain ATCC 42149 / RIB 40) (Yellow koji mold) protein is Deoxyhypusine hydroxylase (lia1).